The primary structure comprises 238 residues: MATPHINAEMGDFADVVLMPGDPIRAKYIAETFLDDVVQVCDVRNMYGFTGTYKGRKISVMGHGMGIPSCSIYMTELIKDFGVKKVIRVGSCGAVNEGIKVRDVVIGMGACTDSKVNRIRFKDHDFAAIADYEMVRNAELAAQARGIDVKVGNLFSAELFYTPDPSMFDLMDKYGIVGVEMEAAGMYGVAAEYGAKALAICTVSDHIKTGEQTTSDERATTFDEMMLIALDSVLLGDK.

Histidine 5 serves as a coordination point for a purine D-ribonucleoside. Residues glycine 21, arginine 25, arginine 44, and 88 to 91 (RVGS) contribute to the phosphate site. A purine D-ribonucleoside is bound by residues 180 to 182 (EME) and 204 to 205 (SD). Aspartate 205 functions as the Proton donor in the catalytic mechanism.

Belongs to the PNP/UDP phosphorylase family. As to quaternary structure, homohexamer; trimer of homodimers.

The catalysed reaction is a purine D-ribonucleoside + phosphate = a purine nucleobase + alpha-D-ribose 1-phosphate. The enzyme catalyses a purine 2'-deoxy-D-ribonucleoside + phosphate = a purine nucleobase + 2-deoxy-alpha-D-ribose 1-phosphate. Its function is as follows. Catalyzes the reversible phosphorolytic breakdown of the N-glycosidic bond in the beta-(deoxy)ribonucleoside molecules, with the formation of the corresponding free purine bases and pentose-1-phosphate. The polypeptide is Purine nucleoside phosphorylase DeoD-type 1 (Aliivibrio fischeri (strain ATCC 700601 / ES114) (Vibrio fischeri)).